Here is a 99-residue protein sequence, read N- to C-terminus: Protein Frey (99 aa).

A helical membrane pass occupies residues 10-29; that stretch reads YPRAGLSLFLFYLILAGALL. Positions 60-90 are disordered; it reads DYGLRPKHPRPGGPRPLLSQAQQRKRDGPNM.

In terms of assembly, interacts with SPPL2C (via active sites); the interaction stabilizes FREY1 protein and inhibits SPPL2C proteolytic activity. Interacts with IZUMO1; the interaction retains IZUMO1 at the endoplasmic reticulum membrane and coordinates IZUMO1 complex assembly. Expressed in round spermatids (at protein level).

Its subcellular location is the endoplasmic reticulum membrane. Key regulator for male fertility expressed transiently in round spermatids where it recruits IZUMO1 at the endoplasmic reticulum (ER) membrane and coordinates the oolemmal binding multimeric complex (IZUMO1 complex) assembly. Upon complete assembly of the IZUMO1 complex, its ER retention is released, facilitating IZUMO1 complex export to the acrosome. Through the interaction with SPPL2C, inhibits its intramembrane protease activity directly accessing the catalytic center of an I-CLiP. The polypeptide is Protein Frey (Mus musculus (Mouse)).